A 346-amino-acid polypeptide reads, in one-letter code: Phenylalanine--tRNA ligase alpha subunit (346 aa).

A Mg(2+)-binding site is contributed by E259.

Belongs to the class-II aminoacyl-tRNA synthetase family. Phe-tRNA synthetase alpha subunit type 1 subfamily. As to quaternary structure, tetramer of two alpha and two beta subunits. The cofactor is Mg(2+).

The protein localises to the cytoplasm. The catalysed reaction is tRNA(Phe) + L-phenylalanine + ATP = L-phenylalanyl-tRNA(Phe) + AMP + diphosphate + H(+). The chain is Phenylalanine--tRNA ligase alpha subunit from Lactococcus lactis subsp. lactis (strain IL1403) (Streptococcus lactis).